We begin with the raw amino-acid sequence, 252 residues long: MSLPATFDLTPEDAQLLLAANTHLGARNVQVHQEPYVFNARPDGVHVINVGKTWEKLVLAARIIAAIPNPEDVVAISSRTFGQRAVLKFAAHTGATPIAGRFTPGSFTNYITRSFKEPRLVIVTDPRSDAQAIKEASYVNIPVIALTDLDSPSEFVDVAIPCNNRGKHSIGLIWYLLAREVLRLRGALVDRTQPWSIMPDLYFYRDPEEVEQQVAEEATTEEAGEEEAKEEVTEEQAEATEWAEENADNVEW.

N-acetylserine is present on Ser-2. The disordered stretch occupies residues 209 to 252 (EVEQQVAEEATTEEAGEEEAKEEVTEEQAEATEWAEENADNVEW). A compositionally biased stretch (acidic residues) spans 218 to 252 (ATTEEAGEEEAKEEVTEEQAEATEWAEENADNVEW).

Belongs to the universal ribosomal protein uS2 family. As to quaternary structure, component of the small ribosomal subunit. Mature ribosomes consist of a small (40S) and a large (60S) subunit. The 40S subunit contains about 33 different proteins and 1 molecule of RNA (18S). The 60S subunit contains about 49 different proteins and 3 molecules of RNA (25S, 5.8S and 5S). Interacts with RPS21.

The protein localises to the cytoplasm. In terms of biological role, required for the assembly and/or stability of the 40S ribosomal subunit. Required for the processing of the 20S rRNA-precursor to mature 18S rRNA in a late step of the maturation of 40S ribosomal subunits. The polypeptide is Small ribosomal subunit protein uS2A (Saccharomyces cerevisiae (strain RM11-1a) (Baker's yeast)).